Consider the following 240-residue polypeptide: tRNA pseudouridine synthase A (240 aa).

Catalysis depends on Asp-50, which acts as the Nucleophile. Tyr-109 serves as a coordination point for substrate.

The protein belongs to the tRNA pseudouridine synthase TruA family. Homodimer.

The catalysed reaction is uridine(38/39/40) in tRNA = pseudouridine(38/39/40) in tRNA. In terms of biological role, formation of pseudouridine at positions 38, 39 and 40 in the anticodon stem and loop of transfer RNAs. This Campylobacter jejuni subsp. jejuni serotype O:6 (strain 81116 / NCTC 11828) protein is tRNA pseudouridine synthase A.